A 656-amino-acid chain; its full sequence is DNA ligase (656 aa).

NAD(+) is bound by residues aspartate 32 to aspartate 36 and serine 81 to leucine 82. The active-site N6-AMP-lysine intermediate is lysine 112. NAD(+)-binding residues include arginine 133, glutamate 167, and lysine 306. Zn(2+)-binding residues include cysteine 400, cysteine 403, cysteine 416, and cysteine 421. In terms of domain architecture, BRCT spans lysine 577–aspartate 656.

This sequence belongs to the NAD-dependent DNA ligase family. LigA subfamily. It depends on Mg(2+) as a cofactor. Requires Mn(2+) as cofactor.

It catalyses the reaction NAD(+) + (deoxyribonucleotide)n-3'-hydroxyl + 5'-phospho-(deoxyribonucleotide)m = (deoxyribonucleotide)n+m + AMP + beta-nicotinamide D-nucleotide.. Its function is as follows. DNA ligase that catalyzes the formation of phosphodiester linkages between 5'-phosphoryl and 3'-hydroxyl groups in double-stranded DNA using NAD as a coenzyme and as the energy source for the reaction. It is essential for DNA replication and repair of damaged DNA. The polypeptide is DNA ligase (Helicobacter pylori (strain ATCC 700392 / 26695) (Campylobacter pylori)).